The sequence spans 319 residues: MEAKGGTVKAASGFNATEDAQTLRKAMKGLGTDEDAIIGILAYRNTAQRQEIRSAYKSTIGRDLIEDLKSELSSNFEQVILGLMTPTVLYDVQELRRAMKGAGTDEGCLIEILASRTPEEIRRINQTYQQQYGRSLEEDICSDTSFMFQRVLVSLSAAGRDEGNYLDDALMKQDAQELYEAGEKRWGTDEVKFLSILCSRNRNHLLHVFDEYKRISQKDIEQSIKSETSGSFEDALLAIVKCMRSKPSYFAERLYKSMKGLGTDDNTLIRVMVSRAEIDMLDIRASFKRLYGKSLYSFIKGDTSGDYRKVLLVLCGGDD.

Position 7 is a phosphothreonine (Thr7). The residue at position 12 (Ser12) is a Phosphoserine. 4 Annexin repeats span residues Phe14 to Thr85, Pro86 to Ala157, Ala169 to Lys241, and Ser245 to Gly316. Lys213, Lys293, and Lys300 each carry N6-acetyllysine.

Belongs to the annexin family.

It localises to the zymogen granule membrane. Calcium/phospholipid-binding protein which promotes membrane fusion and is involved in exocytosis. The sequence is that of Annexin A4 (Anxa4) from Mus musculus (Mouse).